The following is an 84-amino-acid chain: RNA-binding protein Hfq (84 aa).

Positions 11–71 (DTFLNFVRKN…ISTIMPGAPI (61 aa)) constitute a Sm domain.

This sequence belongs to the Hfq family. In terms of assembly, homohexamer.

Functionally, RNA chaperone that binds small regulatory RNA (sRNAs) and mRNAs to facilitate mRNA translational regulation in response to envelope stress, environmental stress and changes in metabolite concentrations. Also binds with high specificity to tRNAs. The protein is RNA-binding protein Hfq of Beijerinckia indica subsp. indica (strain ATCC 9039 / DSM 1715 / NCIMB 8712).